The primary structure comprises 178 residues: CDP-archaeol synthase (178 aa).

The next 5 helical transmembrane spans lie at Ile3–Thr23, Thr55–Leu75, Gly91–Ile111, Ile125–Val145, and Met149–Tyr169.

Belongs to the CDP-archaeol synthase family. Requires Mg(2+) as cofactor.

The protein resides in the cell membrane. It carries out the reaction 2,3-bis-O-(geranylgeranyl)-sn-glycerol 1-phosphate + CTP + H(+) = CDP-2,3-bis-O-(geranylgeranyl)-sn-glycerol + diphosphate. It functions in the pathway membrane lipid metabolism; glycerophospholipid metabolism. In terms of biological role, catalyzes the formation of CDP-2,3-bis-(O-geranylgeranyl)-sn-glycerol (CDP-archaeol) from 2,3-bis-(O-geranylgeranyl)-sn-glycerol 1-phosphate (DGGGP) and CTP. This reaction is the third ether-bond-formation step in the biosynthesis of archaeal membrane lipids. This Methanococcus aeolicus (strain ATCC BAA-1280 / DSM 17508 / OCM 812 / Nankai-3) protein is CDP-archaeol synthase.